A 193-amino-acid polypeptide reads, in one-letter code: dCTP deaminase (193 aa).

DCTP-binding positions include 110–115, Asp-128, 136–138, Tyr-171, Lys-178, and Gln-182; these read RSSLAR and VLE. Glu-138 serves as the catalytic Proton donor/acceptor.

The protein belongs to the dCTP deaminase family. As to quaternary structure, homotrimer.

The catalysed reaction is dCTP + H2O + H(+) = dUTP + NH4(+). The protein operates within pyrimidine metabolism; dUMP biosynthesis; dUMP from dCTP (dUTP route): step 1/2. Catalyzes the deamination of dCTP to dUTP. In Aeromonas salmonicida (strain A449), this protein is dCTP deaminase.